The chain runs to 95 residues: Aspartyl/glutamyl-tRNA(Asn/Gln) amidotransferase subunit C (95 aa).

This sequence belongs to the GatC family. In terms of assembly, heterotrimer of A, B and C subunits.

It catalyses the reaction L-glutamyl-tRNA(Gln) + L-glutamine + ATP + H2O = L-glutaminyl-tRNA(Gln) + L-glutamate + ADP + phosphate + H(+). The enzyme catalyses L-aspartyl-tRNA(Asn) + L-glutamine + ATP + H2O = L-asparaginyl-tRNA(Asn) + L-glutamate + ADP + phosphate + 2 H(+). In terms of biological role, allows the formation of correctly charged Asn-tRNA(Asn) or Gln-tRNA(Gln) through the transamidation of misacylated Asp-tRNA(Asn) or Glu-tRNA(Gln) in organisms which lack either or both of asparaginyl-tRNA or glutaminyl-tRNA synthetases. The reaction takes place in the presence of glutamine and ATP through an activated phospho-Asp-tRNA(Asn) or phospho-Glu-tRNA(Gln). This is Aspartyl/glutamyl-tRNA(Asn/Gln) amidotransferase subunit C from Pseudomonas syringae pv. syringae (strain B728a).